Consider the following 443-residue polypeptide: MSEMTPREIVSELDKHIIGQDNAKRSVAIALRNRWRRMQLNEELRHEVTPKNILMIGPTGVGKTEIARRLAKLANAPFIKVEATKFTEVGYVGKEVDSIIRDLTDAAVKMVRVQAIEKNRYRAEELAEERILDVLIPPAKNNWGQTEQQQEPSAARQAFRKKLREGQLDDKEIEIDLAAAPMGVEIMAPPGMEEMTSQLQSMFQNLGGQKQKARKLKIKDAMKLLIEEEAAKLVNPEELKQDAIDAVEQHGIVFIDEIDKICKRGESSGPDVSREGVQRDLLPLVEGCTVSTKHGMVKTDHILFIASGAFQIAKPSDLIPELQGRLPIRVELQALTTSDFERILTEPNASITVQYKALMATEGVNIEFTDSGIKRIAEAAWQVNESTENIGARRLHTVLERLMEEISYDASDLSGQNITIDADYVSKRLDALVADEDLSRFIL.

ATP is bound by residues isoleucine 18, 60–65 (GVGKTE), aspartate 256, glutamate 321, and arginine 393.

This sequence belongs to the ClpX chaperone family. HslU subfamily. A double ring-shaped homohexamer of HslV is capped on each side by a ring-shaped HslU homohexamer. The assembly of the HslU/HslV complex is dependent on binding of ATP.

It is found in the cytoplasm. In terms of biological role, ATPase subunit of a proteasome-like degradation complex; this subunit has chaperone activity. The binding of ATP and its subsequent hydrolysis by HslU are essential for unfolding of protein substrates subsequently hydrolyzed by HslV. HslU recognizes the N-terminal part of its protein substrates and unfolds these before they are guided to HslV for hydrolysis. This Shigella boydii serotype 18 (strain CDC 3083-94 / BS512) protein is ATP-dependent protease ATPase subunit HslU.